The primary structure comprises 294 residues: 4-hydroxybenzoate octaprenyltransferase (294 aa).

The next 8 membrane-spanning stretches (helical) occupy residues 20–42 (LLRI…ALWL), 98–118 (WEAV…VVLF), 120–140 (NTLT…YPFM), 145–165 (HLPQ…AWAA), 175–195 (WLLF…YAMV), 218–238 (AIIA…GQRA), 242–262 (SFYY…QYLA), and 274–294 (FLNN…DLAF).

Belongs to the UbiA prenyltransferase family. Mg(2+) is required as a cofactor.

The protein resides in the cell inner membrane. The enzyme catalyses all-trans-octaprenyl diphosphate + 4-hydroxybenzoate = 4-hydroxy-3-(all-trans-octaprenyl)benzoate + diphosphate. Its pathway is cofactor biosynthesis; ubiquinone biosynthesis. In terms of biological role, catalyzes the prenylation of para-hydroxybenzoate (PHB) with an all-trans polyprenyl group. Mediates the second step in the final reaction sequence of ubiquinone-8 (UQ-8) biosynthesis, which is the condensation of the polyisoprenoid side chain with PHB, generating the first membrane-bound Q intermediate 3-octaprenyl-4-hydroxybenzoate. This Marinobacter nauticus (strain ATCC 700491 / DSM 11845 / VT8) (Marinobacter aquaeolei) protein is 4-hydroxybenzoate octaprenyltransferase.